Consider the following 69-residue polypeptide: UPF0346 protein llmg_2280 (69 aa).

The protein belongs to the UPF0346 family.

The protein is UPF0346 protein llmg_2280 of Lactococcus lactis subsp. cremoris (strain MG1363).